Consider the following 185-residue polypeptide: Threonylcarbamoyl-AMP synthase (185 aa).

Residues 4–185 (SWRVQQAAQD…IATGQVMRAG (182 aa)) enclose the YrdC-like domain.

This sequence belongs to the SUA5 family. TsaC subfamily.

It localises to the cytoplasm. The catalysed reaction is L-threonine + hydrogencarbonate + ATP = L-threonylcarbamoyladenylate + diphosphate + H2O. Required for the formation of a threonylcarbamoyl group on adenosine at position 37 (t(6)A37) in tRNAs that read codons beginning with adenine. Catalyzes the conversion of L-threonine, HCO(3)(-)/CO(2) and ATP to give threonylcarbamoyl-AMP (TC-AMP) as the acyladenylate intermediate, with the release of diphosphate. The protein is Threonylcarbamoyl-AMP synthase of Pseudomonas savastanoi pv. phaseolicola (strain 1448A / Race 6) (Pseudomonas syringae pv. phaseolicola (strain 1448A / Race 6)).